Here is a 353-residue protein sequence, read N- to C-terminus: Soluble interferon alpha/beta receptor OPG204 (353 aa).

A signal peptide spans Met-1–Phe-21. 2 consecutive Ig-like C2-type domains span residues Leu-67–Asp-139 and Pro-157–Ser-239. Intrachain disulfides connect Cys-75–Cys-131 and Cys-174–Cys-223. N-linked (GlcNAc...) asparagine; by host glycosylation is found at Asn-119, Asn-184, Asn-263, Asn-271, and Asn-323. Residues Pro-248–Thr-347 form the Ig-like V-type domain. Cys-274 and Cys-335 are oxidised to a cystine.

Belongs to the interleukin-1 receptor family. As to quaternary structure, interacts with host IFNA1.

Its subcellular location is the secreted. In terms of biological role, counteracts the antiviral effects of host IFN-alpha/beta and key IFN-inducible proteins involved in viral RNA degradation suxh as host OAS1. Acts as a soluble IFN-alpha receptor and thus inhibits the interaction between host IFN-alpha and its receptor. The protein is Soluble interferon alpha/beta receptor OPG204 (OPG204) of Homo sapiens (Human).